A 407-amino-acid polypeptide reads, in one-letter code: Lysine racemase (407 aa).

The N-terminal stretch at 1–18 (MSLGIRYLALLPLFVITA) is a signal peptide. A lipid anchor (N-palmitoyl cysteine) is attached at C19. The S-diacylglycerol cysteine moiety is linked to residue C19. A disulfide bridge links C70 with C96. K74 serves as the catalytic Proton acceptor. N6-(pyridoxal phosphate)lysine is present on K74. R173 contributes to the substrate binding site. Y299 functions as the Proton acceptor in the catalytic mechanism. M347 contributes to the substrate binding site.

This sequence belongs to the alanine racemase family. Bsr subfamily. Forms a head-to-tail homodimer in the structure. Requires pyridoxal 5'-phosphate as cofactor.

The protein localises to the cell membrane. It localises to the periplasm. It catalyses the reaction L-lysine = D-lysine. The enzyme catalyses L-arginine = D-arginine. With respect to regulation, the racemization activity of Lyr is completely inhibited by hydroxylamine. Functionally, amino-acid racemase that catalyzes the interconversion of L-lysine and D-lysine. To a lesser extent, is also able to interconvert arginine enantiomers. Cannot use methionine, asparagine, alanine, leucine, glutamine, phenylalanine and histidine as substrates. The sequence is that of Lysine racemase from Proteus mirabilis.